The chain runs to 278 residues: Diaminopimelate epimerase (278 aa).

2 residues coordinate substrate: Asn-11 and Asn-75. The active-site Proton donor is the Cys-84. Substrate-binding positions include 85-86, Asn-160, Asn-195, and 213-214; these read GN and ER. Residue Cys-222 is the Proton acceptor of the active site. 223-224 lines the substrate pocket; sequence GT.

It belongs to the diaminopimelate epimerase family. Homodimer.

The protein localises to the cytoplasm. It catalyses the reaction (2S,6S)-2,6-diaminopimelate = meso-2,6-diaminopimelate. The protein operates within amino-acid biosynthesis; L-lysine biosynthesis via DAP pathway; DL-2,6-diaminopimelate from LL-2,6-diaminopimelate: step 1/1. Catalyzes the stereoinversion of LL-2,6-diaminopimelate (L,L-DAP) to meso-diaminopimelate (meso-DAP), a precursor of L-lysine and an essential component of the bacterial peptidoglycan. The sequence is that of Diaminopimelate epimerase from Corynebacterium aurimucosum (strain ATCC 700975 / DSM 44827 / CIP 107346 / CN-1) (Corynebacterium nigricans).